The following is a 491-amino-acid chain: 3-octaprenyl-4-hydroxybenzoate carboxy-lyase (491 aa).

Residue N172 coordinates Mn(2+). Residues 175–177 (IYR), 189–191 (RWL), and 194–195 (RG) contribute to the prenylated FMN site. A Mn(2+)-binding site is contributed by E238. Residue D287 is the Proton donor of the active site.

Belongs to the UbiD family. In terms of assembly, homohexamer. Prenylated FMN is required as a cofactor. The cofactor is Mn(2+).

The protein localises to the cell membrane. The catalysed reaction is a 4-hydroxy-3-(all-trans-polyprenyl)benzoate + H(+) = a 2-(all-trans-polyprenyl)phenol + CO2. It participates in cofactor biosynthesis; ubiquinone biosynthesis. In terms of biological role, catalyzes the decarboxylation of 3-octaprenyl-4-hydroxy benzoate to 2-octaprenylphenol, an intermediate step in ubiquinone biosynthesis. The polypeptide is 3-octaprenyl-4-hydroxybenzoate carboxy-lyase (Histophilus somni (strain 129Pt) (Haemophilus somnus)).